The sequence spans 432 residues: MPDYVNWLRHASPYINAHRDCTFVVMLPGDGVEHPNFGNIVHDLVLLHSLGVRLVLVHGSRPQIESRLADRGLTPHYHRGMRITDAATLDCVIDAVGALRLAIEARLSMDIAASPMQGSRLRVASGNLVTARPIGVLEGVDYHHTGEVRRVDRKGISRLLDERSIVLLSPLGYSPTGEIFNLACEDVATRAAIELGADKLLLFGAEPGLLDADGKLVRELRPQQVAPHLQRLGSDYQGELLDAAAEACKGGVARSHIVSYAEDGALLTELFTRGGGGTLVSQEQFEVVREASIEDVGGLLELISPLEEQGILVRRSREVLEREIEQFSVVEREGMIIACAALYPIADSEAGELACLAVNPEYRHGGRGDELLERIESRARQMGLNTLFVLTTRTAHWFRERGFAPSGVERLPAARASLYNYQRNSKIFEKAL.

The region spanning 286–425 (EVVREASIED…ASLYNYQRNS (140 aa)) is the N-acetyltransferase domain.

The protein belongs to the acetyltransferase family. ArgA subfamily.

The protein localises to the cytoplasm. It catalyses the reaction L-glutamate + acetyl-CoA = N-acetyl-L-glutamate + CoA + H(+). The protein operates within amino-acid biosynthesis; L-arginine biosynthesis; N(2)-acetyl-L-ornithine from L-glutamate: step 1/4. In Pseudomonas putida (strain GB-1), this protein is Amino-acid acetyltransferase.